The chain runs to 296 residues: Homoserine kinase (296 aa).

86 to 96 (KAGSGLGSSAA) contributes to the ATP binding site.

It belongs to the GHMP kinase family. Homoserine kinase subfamily.

The protein localises to the cytoplasm. The catalysed reaction is L-homoserine + ATP = O-phospho-L-homoserine + ADP + H(+). The protein operates within amino-acid biosynthesis; L-threonine biosynthesis; L-threonine from L-aspartate: step 4/5. Its function is as follows. Catalyzes the ATP-dependent phosphorylation of L-homoserine to L-homoserine phosphate. The chain is Homoserine kinase (thrB) from Methanocaldococcus jannaschii (strain ATCC 43067 / DSM 2661 / JAL-1 / JCM 10045 / NBRC 100440) (Methanococcus jannaschii).